The sequence spans 214 residues: Large ribosomal subunit protein uL3 (214 aa).

N5-methylglutamine is present on Gln-155.

Belongs to the universal ribosomal protein uL3 family. In terms of assembly, part of the 50S ribosomal subunit. Forms a cluster with proteins L14 and L19. In terms of processing, methylated by PrmB.

Its function is as follows. One of the primary rRNA binding proteins, it binds directly near the 3'-end of the 23S rRNA, where it nucleates assembly of the 50S subunit. The protein is Large ribosomal subunit protein uL3 of Acinetobacter baumannii (strain ACICU).